The chain runs to 284 residues: Four and a half LIM domains protein 5 (284 aa).

The C4-type zinc finger occupies 8–32 (CQYCTASLLGKKYVLKDDSLFCVTC). LIM zinc-binding domains follow at residues 39 to 100 (NYCE…ECSS), 101 to 160 (KCFH…KEFA), 161 to 220 (HYCN…LYAN), and 223 to 283 (VACS…MDSD).

Interacts with CREM (via the third LIM domain). Interacts (via second LIM domain) with SPAG8.

It localises to the nucleus. In terms of biological role, may be involved in the regulation of spermatogenesis. Stimulates CREM transcriptional activity in a phosphorylation-independent manner. This Macaca fascicularis (Crab-eating macaque) protein is Four and a half LIM domains protein 5 (FHL5).